Consider the following 137-residue polypeptide: Histone H2B.3 (137 aa).

The segment covering 1–37 (KPAEKKPAEKTPVAEKAPAEKKPKAGKKLPKDAAAGD) has biased composition (basic and acidic residues). The disordered stretch occupies residues 1-45 (KPAEKKPAEKTPVAEKAPAEKKPKAGKKLPKDAAAGDKKKKRSKK). An N6-acetyllysine mark is found at lysine 27 and lysine 28. Residue lysine 133 forms a Glycyl lysine isopeptide (Lys-Gly) (interchain with G-Cter in ubiquitin) linkage.

The protein belongs to the histone H2B family. In terms of assembly, the nucleosome is a histone octamer containing two molecules each of H2A, H2B, H3 and H4 assembled in one H3-H4 heterotetramer and two H2A-H2B heterodimers. The octamer wraps approximately 147 bp of DNA. Can be acetylated to formH2BK33ac and H2BK34ac. In terms of processing, monoubiquitinated to form H2BK143ub1; may give a specific tag for epigenetic transcriptional activation. Ubiquitous. Highest level in shoots, fruits and young flower buds, including petals, anthers and ovules.

The protein resides in the nucleus. It is found in the chromosome. In terms of biological role, core component of nucleosome. Nucleosomes wrap and compact DNA into chromatin, limiting DNA accessibility to the cellular machineries which require DNA as a template. Histones thereby play a central role in transcription regulation, DNA repair, DNA replication and chromosomal stability. DNA accessibility is regulated via a complex set of post-translational modifications of histones, also called histone code, and nucleosome remodeling. This Solanum lycopersicum (Tomato) protein is Histone H2B.3 (H2B-3).